The primary structure comprises 76 residues: MRRWISQNNIRLPRGAFFISALFFFNAVCIVSDNLLIIESFGEMAYNISYLTRVPGTNTLLACCCLLRPEEVNSEY.

Residues 18-38 (FISALFFFNAVCIVSDNLLII) traverse the membrane as a helical segment.

The protein localises to the cell membrane. This is an uncharacterized protein from Escherichia coli O6:H1 (strain CFT073 / ATCC 700928 / UPEC).